The chain runs to 290 residues: Shikimate dehydrogenase (NADP(+)) (290 aa).

Shikimate contacts are provided by residues 24–26 and Thr71; that span reads SKS. The Proton acceptor role is filled by Lys75. 2 residues coordinate shikimate: Asn96 and Asp111. Residues 135–139, 159–164, and Ile228 contribute to the NADP(+) site; these read GAGGA and NRTKQR. Tyr230 contacts shikimate. Position 251 (Gly251) interacts with NADP(+).

Belongs to the shikimate dehydrogenase family. As to quaternary structure, homodimer.

The catalysed reaction is shikimate + NADP(+) = 3-dehydroshikimate + NADPH + H(+). It participates in metabolic intermediate biosynthesis; chorismate biosynthesis; chorismate from D-erythrose 4-phosphate and phosphoenolpyruvate: step 4/7. In terms of biological role, involved in the biosynthesis of the chorismate, which leads to the biosynthesis of aromatic amino acids. Catalyzes the reversible NADPH linked reduction of 3-dehydroshikimate (DHSA) to yield shikimate (SA). In Bartonella tribocorum (strain CIP 105476 / IBS 506), this protein is Shikimate dehydrogenase (NADP(+)).